The chain runs to 78 residues: Conotoxin ArMKLT2-0312 (78 aa).

The N-terminal stretch at 1–22 is a signal peptide; it reads MKLTCVLIIAVLFLTACQLITA. A propeptide spanning residues 23–45 is cleaved from the precursor; the sequence is DYSRDKQEYRAVRLRDAMRYSRV. Q48 is subject to Pyrrolidone carboxylic acid. Cystine bridges form between C49-C62, C56-C67, and C61-C75.

This sequence belongs to the conotoxin O1 superfamily. Expressed by the venom duct.

The protein localises to the secreted. The sequence is that of Conotoxin ArMKLT2-0312 from Conus arenatus (Sand-dusted cone).